The sequence spans 332 residues: Holliday junction branch migration complex subunit RuvB (332 aa).

Residues 1–181 (MSRILDNEQM…FGITGHMEYY (181 aa)) form a large ATPase domain (RuvB-L) region. ATP-binding positions include L20, R21, G62, K65, T66, T67, 128–130 (EDF), R171, Y181, and R218. Residue T66 participates in Mg(2+) binding. Positions 182–252 (EEADLTEIVE…ITDQALSMLD (71 aa)) are small ATPAse domain (RuvB-S). A head domain (RuvB-H) region spans residues 255-332 (HEGLDYVDQK…EHLGYEYMEK (78 aa)). DNA-binding residues include R291, R310, R312, and R315.

This sequence belongs to the RuvB family. Homohexamer. Forms an RuvA(8)-RuvB(12)-Holliday junction (HJ) complex. HJ DNA is sandwiched between 2 RuvA tetramers; dsDNA enters through RuvA and exits via RuvB. An RuvB hexamer assembles on each DNA strand where it exits the tetramer. Each RuvB hexamer is contacted by two RuvA subunits (via domain III) on 2 adjacent RuvB subunits; this complex drives branch migration. In the full resolvosome a probable DNA-RuvA(4)-RuvB(12)-RuvC(2) complex forms which resolves the HJ.

The protein resides in the cytoplasm. The catalysed reaction is ATP + H2O = ADP + phosphate + H(+). Functionally, the RuvA-RuvB-RuvC complex processes Holliday junction (HJ) DNA during genetic recombination and DNA repair, while the RuvA-RuvB complex plays an important role in the rescue of blocked DNA replication forks via replication fork reversal (RFR). RuvA specifically binds to HJ cruciform DNA, conferring on it an open structure. The RuvB hexamer acts as an ATP-dependent pump, pulling dsDNA into and through the RuvAB complex. RuvB forms 2 homohexamers on either side of HJ DNA bound by 1 or 2 RuvA tetramers; 4 subunits per hexamer contact DNA at a time. Coordinated motions by a converter formed by DNA-disengaged RuvB subunits stimulates ATP hydrolysis and nucleotide exchange. Immobilization of the converter enables RuvB to convert the ATP-contained energy into a lever motion, pulling 2 nucleotides of DNA out of the RuvA tetramer per ATP hydrolyzed, thus driving DNA branch migration. The RuvB motors rotate together with the DNA substrate, which together with the progressing nucleotide cycle form the mechanistic basis for DNA recombination by continuous HJ branch migration. Branch migration allows RuvC to scan DNA until it finds its consensus sequence, where it cleaves and resolves cruciform DNA. This is Holliday junction branch migration complex subunit RuvB from Streptococcus gordonii (strain Challis / ATCC 35105 / BCRC 15272 / CH1 / DL1 / V288).